The chain runs to 323 residues: MTRHQTHLPFHIVQEGNSIDKPPYSYVALIAMAIDASPDKRMTLNQIYKFIEAKFPYYRDADAKRKQGWQNSIRHNLSLNDCFVKKARDGQSCANDRKGNYWQMVADNAPQFDNGNFKRRRVKRLGIGKMGYANTTETTETGTILQQQLPFFNGLKWPQNIQTMDPFQFFKFQYPNSITDSANTSQINNSSSSSSSFDTSIYTSAFPIPTSHFDTNLVAPSQPPPVVSDVEVVPSDTVKEEVLVDMKPLIPGISSTTFLTSLQMTDPRSIEQQQLLSTASNMYPNAFMPPYTNWSCQPTTTFTGLSFDDPSLYGYGQQFPASS.

A DNA-binding region (fork-head) is located at residues 21 to 122; sequence KPPYSYVALI…DNGNFKRRRV (102 aa).

Its subcellular location is the nucleus. Its function is as follows. Probable transcription factor. Binds to the DNA sequence motif 5'-[TA]TGTT[TG]T[TG][ATG]TT-3'. Regulates sexual dimorphism in the gonad, promoting male gonadal cell fates in chromosomally (XO) male animals, yet plays a role in gonadogenesis in both sexes; probably acts downstream of terminal regulator of sex determination tra-1, to control early gonadogenesis. Positively modulates expression of homeobox protein egl-5, probably acting indirectly, during early gonadal development. The chain is Forkhead transcription factor fkh-6 from Caenorhabditis elegans.